Reading from the N-terminus, the 505-residue chain is Lysine--tRNA ligase (505 aa).

The span at 1–11 (MSDQQLDQPSL) shows a compositional bias: polar residues. The interval 1 to 23 (MSDQQLDQPSLSHEERQHEENKL) is disordered. Residues 12-23 (SHEERQHEENKL) show a composition bias toward basic and acidic residues. Mg(2+) is bound by residues E415 and E422.

It belongs to the class-II aminoacyl-tRNA synthetase family. Homodimer. Mg(2+) is required as a cofactor.

It is found in the cytoplasm. The catalysed reaction is tRNA(Lys) + L-lysine + ATP = L-lysyl-tRNA(Lys) + AMP + diphosphate. This chain is Lysine--tRNA ligase, found in Ectopseudomonas mendocina (strain ymp) (Pseudomonas mendocina).